The chain runs to 641 residues: MNAYSHNLLKEKYPTKQDVITEIMNLEAILHLPKGTEHFVSDLHGEYTAFDHVLRNGSGSIKQKIQDYFSDRMTEQTMQDFALLIYYPEDELALVKKKLRTENELQQWYLDNISHLLEFLELSGSKYTRSKVRKALNPNFVYITEELLYNDPQEFNKRSYINQLLKNILKLDQADKFIIATCYTIQRLVVDHLHVLGDVYDRGEEPDKIMDRLMNYHSVDMQWGNHDLLWLGAMAGSKLCMLNLLRICARYNNLNIIEDAYGINLRHLSRFAEEQYEDNPQFRPKLTNGDGYRFNGEKLQITQIHQAVAMMQFKLEGQVIARRPELKMDDRDLLNKIDYKKNVINLNGKEYSLQNTCFNTVDPKNPNELTDEENAIVDELLISIQHSTKLKRHLDFMMNKGSMYRTYNGNLLFHGCIPADEEGNFCSLKIGSKEYSGKKLFDFSEKMIRKAYSKPNVKDDFATDFMWYLWQGALSPLFGKKSMTTFERYFIADKACHEEVKNPYYKLRENKDFCIKILQEFGFAGDDTNHIINGHTPVKRGHNAICAEGYMLVIDGGYSKAYQPTTGIAGYTLLYNSYGLQLVSHQPFTSKQDAIRSGKDIVSTVRVVKHELQRKSVADTDIGENIKEKIRVLYNLLRNYD.

The protein belongs to the FBPase class 3 family. Requires Mn(2+) as cofactor.

It carries out the reaction beta-D-fructose 1,6-bisphosphate + H2O = beta-D-fructose 6-phosphate + phosphate. Its pathway is carbohydrate biosynthesis; gluconeogenesis. The chain is Fructose-1,6-bisphosphatase class 3 from Ligilactobacillus salivarius (strain UCC118) (Lactobacillus salivarius).